The chain runs to 460 residues: Bifunctional protein GlmU (460 aa).

The segment at 1–229 (MTNYAIILAA…FNESLGVNDR (229 aa)) is pyrophosphorylase. UDP-N-acetyl-alpha-D-glucosamine is bound by residues 8-11 (LAAG), K22, Q72, and 77-78 (GT). Mg(2+) is bound at residue D102. Residues G139, E154, N169, and N227 each contribute to the UDP-N-acetyl-alpha-D-glucosamine site. N227 provides a ligand contact to Mg(2+). The linker stretch occupies residues 230–250 (VALATAETVMRQRITQKHMVN). Residues 251–460 (GVTFQNPETV…RLAHHPSRSK (210 aa)) are N-acetyltransferase. The UDP-N-acetyl-alpha-D-glucosamine site is built by R332 and K350. The active-site Proton acceptor is H362. Residues Y365 and N376 each contribute to the UDP-N-acetyl-alpha-D-glucosamine site. Acetyl-CoA is bound by residues A379, 385-386 (NY), S404, A422, and R439.

It in the N-terminal section; belongs to the N-acetylglucosamine-1-phosphate uridyltransferase family. The protein in the C-terminal section; belongs to the transferase hexapeptide repeat family. As to quaternary structure, homotrimer. Mg(2+) is required as a cofactor.

The protein resides in the cytoplasm. The catalysed reaction is alpha-D-glucosamine 1-phosphate + acetyl-CoA = N-acetyl-alpha-D-glucosamine 1-phosphate + CoA + H(+). It carries out the reaction N-acetyl-alpha-D-glucosamine 1-phosphate + UTP + H(+) = UDP-N-acetyl-alpha-D-glucosamine + diphosphate. Its pathway is nucleotide-sugar biosynthesis; UDP-N-acetyl-alpha-D-glucosamine biosynthesis; N-acetyl-alpha-D-glucosamine 1-phosphate from alpha-D-glucosamine 6-phosphate (route II): step 2/2. The protein operates within nucleotide-sugar biosynthesis; UDP-N-acetyl-alpha-D-glucosamine biosynthesis; UDP-N-acetyl-alpha-D-glucosamine from N-acetyl-alpha-D-glucosamine 1-phosphate: step 1/1. It participates in bacterial outer membrane biogenesis; LPS lipid A biosynthesis. In terms of biological role, catalyzes the last two sequential reactions in the de novo biosynthetic pathway for UDP-N-acetylglucosamine (UDP-GlcNAc). The C-terminal domain catalyzes the transfer of acetyl group from acetyl coenzyme A to glucosamine-1-phosphate (GlcN-1-P) to produce N-acetylglucosamine-1-phosphate (GlcNAc-1-P), which is converted into UDP-GlcNAc by the transfer of uridine 5-monophosphate (from uridine 5-triphosphate), a reaction catalyzed by the N-terminal domain. This is Bifunctional protein GlmU from Streptococcus pyogenes serotype M5 (strain Manfredo).